The primary structure comprises 371 residues: Pyruvate dehydrogenase E1 component subunit alpha (371 aa).

Heterodimer of an alpha and a beta chain. It depends on thiamine diphosphate as a cofactor.

It catalyses the reaction N(6)-[(R)-lipoyl]-L-lysyl-[protein] + pyruvate + H(+) = N(6)-[(R)-S(8)-acetyldihydrolipoyl]-L-lysyl-[protein] + CO2. With respect to regulation, activity of the E1 module is inhibited by the pyruvate dehydrogenase inhibitor PdhI. In terms of biological role, the pyruvate dehydrogenase complex catalyzes the overall conversion of pyruvate to acetyl-CoA and CO(2). It contains multiple copies of three enzymatic components: pyruvate dehydrogenase (E1), dihydrolipoamide acetyltransferase (E2) and lipoamide dehydrogenase (E3). Its function is as follows. The B.subtilis PDH complex also possesses branched-chain 2-oxoacid dehydrogenase (BCDH) activity. The polypeptide is Pyruvate dehydrogenase E1 component subunit alpha (Bacillus subtilis (strain 168)).